The chain runs to 436 residues: C4-dicarboxylate transport protein 2 (436 aa).

The next 9 helical transmembrane spans lie at Val-14–Ala-34, Leu-45–Met-65, Met-77–Val-97, Val-142–Gly-162, Pro-198–Val-218, Leu-223–Ala-243, Val-290–Leu-310, Ile-331–Gly-351, and Ile-353–Ile-373. Residues Glu-414 to Val-436 form a disordered region.

This sequence belongs to the dicarboxylate/amino acid:cation symporter (DAACS) (TC 2.A.23) family.

The protein localises to the cell inner membrane. Functionally, responsible for the transport of dicarboxylates such as succinate, fumarate, and malate from the periplasm across the membrane. This is C4-dicarboxylate transport protein 2 from Pseudomonas aeruginosa (strain UCBPP-PA14).